The sequence spans 153 residues: MTHDNKLQVEAIKCGTVIDHIPAQVGFKLLSLFKLTETDQRITIGLNLPSGEMGRKDLIKIENTFLTDEQINQLALYAPQATVNRIDNYDVVGKSRPSLPERINNVLVCPNSNCISHAEPVSSSFAVKKRANDIALKCKYCEKEFSHYVVLAN.

Zn(2+) contacts are provided by Cys109, Cys114, Cys138, and Cys141.

The protein belongs to the PyrI family. In terms of assembly, contains catalytic and regulatory chains. Zn(2+) is required as a cofactor.

Its function is as follows. Involved in allosteric regulation of aspartate carbamoyltransferase. The sequence is that of Aspartate carbamoyltransferase regulatory chain from Salmonella paratyphi A (strain ATCC 9150 / SARB42).